We begin with the raw amino-acid sequence, 368 residues long: MPIARERKARLENAMSRKKTGLSYADAGVDIDAGNALVEKIKPLVRATRRPGADGEIGGFGGLFDLKAAGFTDPILIAANDGVGTKLKVAIEAGKHDTVGIDLVAMCVNDLVVQGAEPLFFLDYFATGKLDPDQGAAIVAGIAEGCRQAGCALIGGETAEMPGMYRDGDYDLAGFAVGAAERGRLLPTNDIVEGDVILGLASTGVHSNGFSLVRRIVEVSGLDWNDPAPFDSDRSLAEALLTPTRIYVKPILSAIARTHGIKALAHITGGGFPENIPRVLPPAYAAEIDLEAVNVLPVFSWLAERGGVAAQEMLRTFNCGIGMIAVVAAGQAAQVAAVLQKEGEHVEILGSIVPRRDKGVIYQGALEL.

The protein belongs to the AIR synthase family.

The protein localises to the cytoplasm. The catalysed reaction is 2-formamido-N(1)-(5-O-phospho-beta-D-ribosyl)acetamidine + ATP = 5-amino-1-(5-phospho-beta-D-ribosyl)imidazole + ADP + phosphate + H(+). Its pathway is purine metabolism; IMP biosynthesis via de novo pathway; 5-amino-1-(5-phospho-D-ribosyl)imidazole from N(2)-formyl-N(1)-(5-phospho-D-ribosyl)glycinamide: step 2/2. The polypeptide is Phosphoribosylformylglycinamidine cyclo-ligase (Chelativorans sp. (strain BNC1)).